The sequence spans 213 residues: ATP-dependent dethiobiotin synthetase BioD (213 aa).

13-18 (GIGKTV) contributes to the ATP binding site. Residue Thr17 coordinates Mg(2+). Lys33 is a catalytic residue. Mg(2+) is bound at residue Glu100. Residues 100-103 (EGAG) and 184-186 (PRL) contribute to the ATP site.

This sequence belongs to the dethiobiotin synthetase family. Homodimer. Mg(2+) serves as cofactor.

Its subcellular location is the cytoplasm. The catalysed reaction is (7R,8S)-7,8-diammoniononanoate + CO2 + ATP = (4R,5S)-dethiobiotin + ADP + phosphate + 3 H(+). It participates in cofactor biosynthesis; biotin biosynthesis; biotin from 7,8-diaminononanoate: step 1/2. In terms of biological role, catalyzes a mechanistically unusual reaction, the ATP-dependent insertion of CO2 between the N7 and N8 nitrogen atoms of 7,8-diaminopelargonic acid (DAPA, also called 7,8-diammoniononanoate) to form a ureido ring. The sequence is that of ATP-dependent dethiobiotin synthetase BioD from Rhodopseudomonas palustris (strain HaA2).